A 631-amino-acid chain; its full sequence is Pescadillo homolog (631 aa).

In terms of domain architecture, BRCT spans 321-414 (RLRTLFKGLK…QLLPTNDYFL (94 aa)). Residues 428–442 (SKRDSYIPPEEKALH) are compositionally biased toward basic and acidic residues. 3 disordered regions span residues 428 to 471 (SKRD…EADQ), 489 to 561 (YKKY…VDEH), and 602 to 631 (ADNK…KLVK). S453 and S457 each carry phosphoserine. 2 stretches are compositionally biased toward acidic residues: residues 453–471 (SEEE…EADQ) and 498–525 (VNED…EDVD). Basic and acidic residues predominate over residues 526 to 538 (EQTKRKQQEKEKM). The span at 544–553 (KVHKVNKRQV) shows a compositional bias: basic residues. Residues 591-631 (WLLRKKRRNIDADNKEAKKAAKREARKQAAEAAARAAKLVK) adopt a coiled-coil conformation. A compositionally biased stretch (basic and acidic residues) spans 602-619 (ADNKEAKKAAKREARKQA). Positions 620–631 (AEAAARAAKLVK) are enriched in low complexity.

This sequence belongs to the pescadillo family.

The protein resides in the nucleus. It localises to the nucleolus. Its subcellular location is the nucleoplasm. Its function is as follows. Required for maturation of ribosomal RNAs and formation of the large ribosomal subunit. In Drosophila pseudoobscura pseudoobscura (Fruit fly), this protein is Pescadillo homolog.